The sequence spans 438 residues: UDP-N-acetylmuramoylalanine--D-glutamate ligase (438 aa).

Gly112 to Thr118 serves as a coordination point for ATP.

This sequence belongs to the MurCDEF family.

The protein resides in the cytoplasm. The enzyme catalyses UDP-N-acetyl-alpha-D-muramoyl-L-alanine + D-glutamate + ATP = UDP-N-acetyl-alpha-D-muramoyl-L-alanyl-D-glutamate + ADP + phosphate + H(+). The protein operates within cell wall biogenesis; peptidoglycan biosynthesis. Cell wall formation. Catalyzes the addition of glutamate to the nucleotide precursor UDP-N-acetylmuramoyl-L-alanine (UMA). The polypeptide is UDP-N-acetylmuramoylalanine--D-glutamate ligase (Salmonella typhi).